Here is a 446-residue protein sequence, read N- to C-terminus: Signal recognition particle protein (446 aa).

GTP-binding positions include 106-113 (GLQGSGKT), 188-192 (DTAGR), and 246-249 (SKLD).

This sequence belongs to the GTP-binding SRP family. SRP54 subfamily. As to quaternary structure, part of the signal recognition particle protein translocation system, which is composed of SRP and FtsY.

The protein localises to the cytoplasm. It catalyses the reaction GTP + H2O = GDP + phosphate + H(+). Involved in targeting and insertion of nascent membrane proteins into the cytoplasmic membrane. Binds to the hydrophobic signal sequence of the ribosome-nascent chain (RNC) as it emerges from the ribosomes. The SRP-RNC complex is then targeted to the cytoplasmic membrane where it interacts with the SRP receptor FtsY. In Mycoplasma genitalium (strain ATCC 33530 / DSM 19775 / NCTC 10195 / G37) (Mycoplasmoides genitalium), this protein is Signal recognition particle protein.